The following is a 303-amino-acid chain: Probable alpha-L-glutamate ligase (303 aa).

One can recognise an ATP-grasp domain in the interval 104–287 (LQLLAREGID…IAGMMIEFIE (184 aa)). ATP-binding positions include Lys-141, 178 to 179 (EY), Asp-187, and 211 to 213 (RSN). Mg(2+) contacts are provided by Asp-248, Glu-260, and Asn-262. 3 residues coordinate Mn(2+): Asp-248, Glu-260, and Asn-262.

It belongs to the RimK family. The cofactor is Mg(2+). Mn(2+) serves as cofactor.

In Pectobacterium carotovorum subsp. carotovorum (strain PC1), this protein is Probable alpha-L-glutamate ligase.